Consider the following 145-residue polypeptide: 3-hydroxyacyl-[acyl-carrier-protein] dehydratase FabZ (145 aa).

His-48 is a catalytic residue.

This sequence belongs to the thioester dehydratase family. FabZ subfamily.

Its subcellular location is the cytoplasm. The enzyme catalyses a (3R)-hydroxyacyl-[ACP] = a (2E)-enoyl-[ACP] + H2O. In terms of biological role, involved in unsaturated fatty acids biosynthesis. Catalyzes the dehydration of short chain beta-hydroxyacyl-ACPs and long chain saturated and unsaturated beta-hydroxyacyl-ACPs. This is 3-hydroxyacyl-[acyl-carrier-protein] dehydratase FabZ from Geobacillus thermodenitrificans (strain NG80-2).